Consider the following 649-residue polypeptide: Acetyl-coenzyme A synthetase (649 aa).

CoA is bound by residues 189-192 (RGGK), threonine 311, and asparagine 335. Residues 387-389 (GEP), 411-416 (DTWWQT), aspartate 500, and arginine 515 contribute to the ATP site. Serine 523 is a CoA binding site. Arginine 526 provides a ligand contact to ATP. Mg(2+) contacts are provided by valine 537, histidine 539, and valine 542. CoA is bound at residue arginine 584. Lysine 609 is subject to N6-acetyllysine.

This sequence belongs to the ATP-dependent AMP-binding enzyme family. It depends on Mg(2+) as a cofactor. Acetylated. Deacetylation by the SIR2-homolog deacetylase activates the enzyme.

It carries out the reaction acetate + ATP + CoA = acetyl-CoA + AMP + diphosphate. Functionally, catalyzes the conversion of acetate into acetyl-CoA (AcCoA), an essential intermediate at the junction of anabolic and catabolic pathways. AcsA undergoes a two-step reaction. In the first half reaction, AcsA combines acetate with ATP to form acetyl-adenylate (AcAMP) intermediate. In the second half reaction, it can then transfer the acetyl group from AcAMP to the sulfhydryl group of CoA, forming the product AcCoA. The protein is Acetyl-coenzyme A synthetase of Sinorhizobium fredii (strain NBRC 101917 / NGR234).